The sequence spans 360 residues: Phosphoserine aminotransferase (360 aa).

Arg-42 contributes to the L-glutamate binding site. Pyridoxal 5'-phosphate is bound by residues Trp-102, Thr-152, Asp-171, and Gln-194. Lys-195 is subject to N6-(pyridoxal phosphate)lysine. Asn-237–Thr-238 provides a ligand contact to pyridoxal 5'-phosphate.

It belongs to the class-V pyridoxal-phosphate-dependent aminotransferase family. SerC subfamily. Homodimer. Pyridoxal 5'-phosphate serves as cofactor.

It is found in the cytoplasm. The enzyme catalyses O-phospho-L-serine + 2-oxoglutarate = 3-phosphooxypyruvate + L-glutamate. The catalysed reaction is 4-(phosphooxy)-L-threonine + 2-oxoglutarate = (R)-3-hydroxy-2-oxo-4-phosphooxybutanoate + L-glutamate. Its pathway is amino-acid biosynthesis; L-serine biosynthesis; L-serine from 3-phospho-D-glycerate: step 2/3. It participates in cofactor biosynthesis; pyridoxine 5'-phosphate biosynthesis; pyridoxine 5'-phosphate from D-erythrose 4-phosphate: step 3/5. Functionally, catalyzes the reversible conversion of 3-phosphohydroxypyruvate to phosphoserine and of 3-hydroxy-2-oxo-4-phosphonooxybutanoate to phosphohydroxythreonine. This chain is Phosphoserine aminotransferase, found in Coxiella burnetii (strain Dugway 5J108-111).